The sequence spans 212 residues: MSDVAIIDYGMGNLRSVAKAIEHVAPGKRVAVTSDPAVVAAAARVVFPGQGAMPDCMRELDLRGLREVVKTAAASKPFLGICIGQQMLFEHSEEGNVPGLGILPGGVVRFPDAKMVAADGSRLKVPHMGWNEVCQRKPHPMWEGIPDNERFYFVHSYFVAPADAALVAAESDYGTRFTSAVARANIFAVQFHPEKSAQAGLKMLANFISWAP.

Positions 3–212 (DVAIIDYGMG…MLANFISWAP (210 aa)) constitute a Glutamine amidotransferase type-1 domain. C82 functions as the Nucleophile in the catalytic mechanism. Residues H192 and E194 contribute to the active site.

In terms of assembly, heterodimer of HisH and HisF.

Its subcellular location is the cytoplasm. The catalysed reaction is 5-[(5-phospho-1-deoxy-D-ribulos-1-ylimino)methylamino]-1-(5-phospho-beta-D-ribosyl)imidazole-4-carboxamide + L-glutamine = D-erythro-1-(imidazol-4-yl)glycerol 3-phosphate + 5-amino-1-(5-phospho-beta-D-ribosyl)imidazole-4-carboxamide + L-glutamate + H(+). It catalyses the reaction L-glutamine + H2O = L-glutamate + NH4(+). The protein operates within amino-acid biosynthesis; L-histidine biosynthesis; L-histidine from 5-phospho-alpha-D-ribose 1-diphosphate: step 5/9. In terms of biological role, IGPS catalyzes the conversion of PRFAR and glutamine to IGP, AICAR and glutamate. The HisH subunit catalyzes the hydrolysis of glutamine to glutamate and ammonia as part of the synthesis of IGP and AICAR. The resulting ammonia molecule is channeled to the active site of HisF. This chain is Imidazole glycerol phosphate synthase subunit HisH, found in Aromatoleum aromaticum (strain DSM 19018 / LMG 30748 / EbN1) (Azoarcus sp. (strain EbN1)).